Here is a 257-residue protein sequence, read N- to C-terminus: Phycoerythrobilin:ferredoxin oxidoreductase (257 aa).

It belongs to the HY2 family.

It catalyses the reaction (3Z)-phycoerythrobilin + oxidized 2[4Fe-4S]-[ferredoxin] = 15,16-dihydrobiliverdin + reduced 2[4Fe-4S]-[ferredoxin] + 2 H(+). In terms of biological role, catalyzes the two-electron reduction of the C2 and C3(1) diene system of 15,16-dihydrobiliverdin. This Prochlorococcus marinus (strain SARG / CCMP1375 / SS120) protein is Phycoerythrobilin:ferredoxin oxidoreductase (pebB).